The chain runs to 612 residues: Zinc metalloproteinase-disintegrin-like 8 (612 aa).

An N-terminal signal peptide occupies residues Met1 to Ser20. Positions Ile21–Pro189 are excised as a propeptide. Residues Lys199–Pro395 enclose the Peptidase M12B domain. A Ca(2+)-binding site is contributed by Glu202. Asn218 carries an N-linked (GlcNAc...) asparagine glycan. Asp286 contacts Ca(2+). Intrachain disulfides connect Cys310/Cys390, Cys350/Cys374, and Cys352/Cys357. His335 serves as a coordination point for Zn(2+). Glu336 is a catalytic residue. Zn(2+)-binding residues include His339 and His345. Ca(2+) is bound by residues Cys390, Asn393, Val405, Asn408, Phe410, Glu412, Glu415, and Asp418. In terms of domain architecture, Disintegrin spans Pro403–Asn489. 14 disulfide bridges follow: Cys406/Cys435, Cys417/Cys430, Cys419/Cys425, Cys429/Cys452, Cys443/Cys449, Cys448/Cys474, Cys461/Cys481, Cys468/Cys500, Cys493/Cys505, Cys512/Cys562, Cys527/Cys573, Cys540/Cys550, Cys557/Cys599, and Cys593/Cys605. Positions Glu467–Asp469 match the D/ECD-tripeptide motif. Asn502 is a glycosylation site (N-linked (GlcNAc...) asparagine).

Belongs to the venom metalloproteinase (M12B) family. P-III subfamily. It depends on Zn(2+) as a cofactor. Expressed by the venom gland.

Its subcellular location is the secreted. Snake venom metalloproteinase that impairs hemostasis in the envenomed animal. This chain is Zinc metalloproteinase-disintegrin-like 8, found in Crotalus adamanteus (Eastern diamondback rattlesnake).